Here is a 329-residue protein sequence, read N- to C-terminus: DNA-directed RNA polymerase subunit alpha (329 aa).

An alpha N-terminal domain (alpha-NTD) region spans residues 1–231 (MSILSFQMPE…KHFMLFSDQT (231 aa)). The tract at residues 247 to 329 (EEFLHMRKLL…DTAKYKLDED (83 aa)) is alpha C-terminal domain (alpha-CTD).

The protein belongs to the RNA polymerase alpha chain family. In terms of assembly, homodimer. The RNAP catalytic core consists of 2 alpha, 1 beta, 1 beta' and 1 omega subunit. When a sigma factor is associated with the core the holoenzyme is formed, which can initiate transcription.

It catalyses the reaction RNA(n) + a ribonucleoside 5'-triphosphate = RNA(n+1) + diphosphate. DNA-dependent RNA polymerase catalyzes the transcription of DNA into RNA using the four ribonucleoside triphosphates as substrates. The sequence is that of DNA-directed RNA polymerase subunit alpha from Cytophaga hutchinsonii (strain ATCC 33406 / DSM 1761 / CIP 103989 / NBRC 15051 / NCIMB 9469 / D465).